A 288-amino-acid polypeptide reads, in one-letter code: NAD(P)H-hydrate epimerase (288 aa).

The transit peptide at 1-48 (MSALRALLGLGLLAAGSRLRRVPGRAGACPAGSAWWEARRPHSGGGGE) directs the protein to the mitochondrion. In terms of domain architecture, YjeF N-terminal spans 65-275 (AQAVDEELFN…ALEKKYQLNL (211 aa)). Position 119 to 123 (119 to 123 (NNGGD)) interacts with (6S)-NADPHX. Asn120 is a binding site for K(+). Residue Lys144 is modified to N6-succinyllysine. Asp185 is a binding site for K(+). (6S)-NADPHX-binding positions include 189–195 (GFSFKGD) and Asp218. Ser221 serves as a coordination point for K(+).

It belongs to the NnrE/AIBP family. In terms of assembly, homodimer. Interacts with APOA1 and APOA2. K(+) serves as cofactor. In terms of processing, undergoes physiological phosphorylation during sperm capacitation, downstream to PKA activation.

The protein resides in the mitochondrion. The protein localises to the secreted. It carries out the reaction (6R)-NADHX = (6S)-NADHX. The catalysed reaction is (6R)-NADPHX = (6S)-NADPHX. In terms of biological role, catalyzes the epimerization of the S- and R-forms of NAD(P)HX, a damaged form of NAD(P)H that is a result of enzymatic or heat-dependent hydration. This is a prerequisite for the S-specific NAD(P)H-hydrate dehydratase to allow the repair of both epimers of NAD(P)HX. Accelerates cholesterol efflux from endothelial cells to high-density lipoprotein (HDL) and thereby regulates angiogenesis. In Canis lupus familiaris (Dog), this protein is NAD(P)H-hydrate epimerase.